The primary structure comprises 211 residues: Probable GTP-binding protein EngB (211 aa).

The region spanning 22-195 (PFPEVAFAGK…WQLIDSYVLP (174 aa)) is the EngB-type G domain. GTP-binding positions include 30–37 (GKSNVGKS), 57–61 (GKTQT), 75–78 (DLPG), 142–145 (TKLD), and 174–176 (FSS). Mg(2+) is bound by residues Ser-37 and Thr-59.

The protein belongs to the TRAFAC class TrmE-Era-EngA-EngB-Septin-like GTPase superfamily. EngB GTPase family. Mg(2+) is required as a cofactor.

Functionally, necessary for normal cell division and for the maintenance of normal septation. The protein is Probable GTP-binding protein EngB of Lachnospira eligens (strain ATCC 27750 / DSM 3376 / VPI C15-48 / C15-B4) (Eubacterium eligens).